The sequence spans 664 residues: 26S rRNA (cytosine-C(5))-methyltransferase nsun-1 (664 aa).

Residues 1 to 105 (MAIVKKKKVS…DDSDAGDHLP (105 aa)) are disordered. Positions 38–52 (PKKKKLVKKVKKSAK) are enriched in basic residues. Over residues 53-68 (KAHEEEPIEQVEKLQL) the composition is skewed to basic and acidic residues. Acidic residues predominate over residues 84-99 (SDDEDLRDDYSDDDSD). S-adenosyl-L-methionine contacts are provided by residues 313-319 (CSAPGGK), Asp-337, and Asp-382. The active-site Nucleophile is Cys-439. A disordered region spans residues 513 to 664 (KMSKQGVMEK…RRKKMLAKQQ (152 aa)). A compositionally biased stretch (basic and acidic residues) spans 519–528 (VMEKEKEKAA). Acidic residues predominate over residues 541 to 550 (EASESSDDEE). Residues 563–572 (KPAKKQQQKK) show a composition bias toward basic residues. Residues 606–618 (KAAEKQAAVKEDD) are compositionally biased toward basic and acidic residues. 2 stretches are compositionally biased toward basic residues: residues 627–644 (KRAK…KRAA) and 652–664 (VKNR…AKQQ).

Belongs to the class I-like SAM-binding methyltransferase superfamily. RsmB/NOP family.

The protein resides in the nucleus. Its subcellular location is the nucleolus. It catalyses the reaction a cytidine in 26S rRNA + S-adenosyl-L-methionine = a 5-methylcytidine in 26S rRNA + S-adenosyl-L-homocysteine + H(+). In terms of biological role, methyltransferase which methylates the carbon-5 position of cytosine 2982 to 5-methylcytosine (m5C2982) in 26S rRNA. May play a role in the translation of leucine and proline codons. May be required for the translation of specific mRNAs such as mRNAs involved in gonad development, collagen production and cuticle integrity. Plays a role in ensuring the correct localization of the germline-specific protein gld-1 during development. Not required for pre-rRNA processing, the production of mature 5S, 5.8S, 18S or 26S rRNAs or global translation. Plays a role in positively regulating fertility. The chain is 26S rRNA (cytosine-C(5))-methyltransferase nsun-1 from Caenorhabditis elegans.